The following is a 320-amino-acid chain: Protein TsetseEP (320 aa).

An N-terminal signal peptide occupies residues 1 to 19; sequence MKFFISFAFLCLVLSCVAA. Positions 192 to 320 are disordered; it reads GLPEPEPEPE…ESKPNSLFNF (129 aa). Residues 194–308 show a composition bias toward acidic residues; that stretch reads PEPEPEPEPE…EPEPEPEPQP (115 aa). Residues 194 to 311 form a 59 X 2 AA tandem repeats of P-E region; it reads PEPEPEPEPE…PEPEPQPEPE (118 aa).

As to expression, expressed in the gut, but not salivary glands, of female and male flies (at protein level). Present in vesicles in midgut cells and in the lumen of the gut.

It localises to the secreted. The polypeptide is Protein TsetseEP (Glossina morsitans morsitans (Savannah tsetse fly)).